Reading from the N-terminus, the 668-residue chain is Probable syringafactin export ATP-binding/permease protein SyfD (668 aa).

In terms of domain architecture, ABC transporter spans leucine 22 to proline 260. Residue glycine 58–serine 65 coordinates ATP. The tract at residues arginine 242–alanine 263 is disordered. The segment covering alanine 245–proline 256 has biased composition (low complexity). 5 helical membrane passes run leucine 267–serine 287, leucine 293–glycine 313, leucine 541–methionine 561, methionine 602–valine 622, and leucine 631–valine 651.

The protein belongs to the ABC transporter superfamily. Macrolide exporter (TC 3.A.1.122) family. Probably part of a tripartite efflux system, which is composed of an inner membrane transporter, a periplasmic membrane fusion protein, and an outer membrane component.

It is found in the cell inner membrane. In terms of biological role, probably involved in the export of syringafactins. In Pseudomonas syringae pv. tomato (strain ATCC BAA-871 / DC3000), this protein is Probable syringafactin export ATP-binding/permease protein SyfD.